The sequence spans 285 residues: Bifunctional protein FolD (285 aa).

NADP(+) is bound by residues 165–167 (GRS) and serine 190.

Belongs to the tetrahydrofolate dehydrogenase/cyclohydrolase family. Homodimer.

The enzyme catalyses (6R)-5,10-methylene-5,6,7,8-tetrahydrofolate + NADP(+) = (6R)-5,10-methenyltetrahydrofolate + NADPH. The catalysed reaction is (6R)-5,10-methenyltetrahydrofolate + H2O = (6R)-10-formyltetrahydrofolate + H(+). Its pathway is one-carbon metabolism; tetrahydrofolate interconversion. Catalyzes the oxidation of 5,10-methylenetetrahydrofolate to 5,10-methenyltetrahydrofolate and then the hydrolysis of 5,10-methenyltetrahydrofolate to 10-formyltetrahydrofolate. This chain is Bifunctional protein FolD, found in Staphylococcus carnosus (strain TM300).